The sequence spans 125 residues: Large ribosomal subunit protein bL12 (125 aa).

Belongs to the bacterial ribosomal protein bL12 family. As to quaternary structure, homodimer. Part of the ribosomal stalk of the 50S ribosomal subunit. Forms a multimeric L10(L12)X complex, where L10 forms an elongated spine to which 2 to 4 L12 dimers bind in a sequential fashion. Binds GTP-bound translation factors.

Forms part of the ribosomal stalk which helps the ribosome interact with GTP-bound translation factors. Is thus essential for accurate translation. The sequence is that of Large ribosomal subunit protein bL12 from Granulibacter bethesdensis (strain ATCC BAA-1260 / CGDNIH1).